The primary structure comprises 538 residues: Syncytin-1 (538 aa).

The N-terminal stretch at 1-20 is a signal peptide; the sequence is MALPYHIFLFTVLLPSFTLT. At 21–443 the chain is on the extracellular side; it reads APPPCRCMTS…NIGPWGLFSQ (423 aa). A glycan (N-linked (GlcNAc...) asparagine) is linked at Asn169. The CXXC signature appears at 186–189; that stretch reads CWMC. 3 cysteine pairs are disulfide-bonded: Cys186-Cys189, Cys186-Cys405, and Cys397-Cys404. 6 N-linked (GlcNAc...) asparagine glycosylation sites follow: Asn208, Asn214, Asn234, Asn242, Asn245, and Asn281. Residues 320–340 are fusion peptide; that stretch reads ILPFVMAAGVLGALGTGIGGI. The segment at 380 to 396 is immunosuppression; the sequence is LQNRRALDLLTAERGGT. The CX6CC motif lies at 397–405; it reads CLFLGEECC. An N-linked (GlcNAc...) asparagine glycan is attached at Asn409. A helical transmembrane segment spans residues 444 to 464; sequence WMPWILPFLGPLAAIILLLLF. The tract at residues 465–484 is essential for the fusiogenic function; the sequence is GPCIFNLLVNFVSSRIEAVK. The Cytoplasmic portion of the chain corresponds to 465-538; sequence GPCIFNLLVN…LLRPNSAGSS (74 aa). The interval 501–538 is disordered; sequence PLDWPASPRSDVNDIKGTPPEEISTAQPLLRPNSAGSS.

This sequence belongs to the gamma type-C retroviral envelope protein family. HERV class-I W env subfamily. In terms of assembly, the mature envelope protein (Env) consists of a trimer of SU-TM heterodimers attached probably by a labile interchain disulfide bond. Interacts with the C-type lectin CD209/DC-SIGN. In terms of processing, specific enzymatic cleavages in vivo yield mature proteins. Envelope glycoproteins are synthesized as an inactive precursor that is heavily N-glycosylated and processed likely by furin in the Golgi to yield the mature SU and TM proteins. The cleavage site between SU and TM requires the minimal sequence [KR]-X-[KR]-R. The CXXC motif is highly conserved across a broad range of retroviral envelope proteins. It is thought to participate in the formation of a labile disulfide bond possibly with the CX6CC motif present in the transmembrane protein.

The protein resides in the cell membrane. Its subcellular location is the virion. Functionally, this endogenous retroviral envelope protein has retained its original fusogenic properties and participates in trophoblast fusion and the formation of a syncytium during placenta morphogenesis. May recognize and induce fusion through binding of SLC1A4 and SLC1A5. Its function is as follows. Endogenous envelope proteins may have kept, lost or modified their original function during evolution. Retroviral envelope proteins mediate receptor recognition and membrane fusion during early infection. The surface protein (SU) mediates receptor recognition, while the transmembrane protein (TM) acts as a class I viral fusion protein. The protein may have at least 3 conformational states: pre-fusion native state, pre-hairpin intermediate state, and post-fusion hairpin state. During viral and target cell membrane fusion, the coiled coil regions (heptad repeats) assume a trimer-of-hairpins structure, positioning the fusion peptide in close proximity to the C-terminal region of the ectodomain. The formation of this structure appears to drive apposition and subsequent fusion of membranes. The protein is Syncytin-1 (ERVW-1) of Pongo pygmaeus (Bornean orangutan).